We begin with the raw amino-acid sequence, 196 residues long: Carnitine operon protein CaiE (196 aa).

Positions 173–196 are disordered; sequence TQPLRQMEENRPRLQGTTDVTPKR. Residues 187–196 show a composition bias toward polar residues; it reads QGTTDVTPKR.

The protein belongs to the transferase hexapeptide repeat family.

It participates in amine and polyamine metabolism; carnitine metabolism. Functionally, overproduction of CaiE stimulates the activity of CaiB and CaiD. The polypeptide is Carnitine operon protein CaiE (Shigella flexneri serotype 5b (strain 8401)).